Here is a 137-residue protein sequence, read N- to C-terminus: Ribosomal RNA large subunit methyltransferase H (137 aa).

S-adenosyl-L-methionine-binding positions include L56, G85, and 104-109 (LSPLTL).

Belongs to the RNA methyltransferase RlmH family. Homodimer.

The protein resides in the cytoplasm. The enzyme catalyses pseudouridine(1915) in 23S rRNA + S-adenosyl-L-methionine = N(3)-methylpseudouridine(1915) in 23S rRNA + S-adenosyl-L-homocysteine + H(+). Its function is as follows. Specifically methylates the pseudouridine at position 1915 (m3Psi1915) in 23S rRNA. The protein is Ribosomal RNA large subunit methyltransferase H of Thermus thermophilus (strain ATCC BAA-163 / DSM 7039 / HB27).